We begin with the raw amino-acid sequence, 435 residues long: Diguanylate cyclase TpbB (435 aa).

At 1–22 the chain is on the cytoplasmic side; it reads MNRRRRYTGSNPSLRRVLYRAH. Residues 23 to 43 traverse the membrane as a helical segment; the sequence is LGVALVAVFTAGLAVTLVGLL. Residues 44–154 lie on the Periplasmic side of the membrane; it reads TLRAYADPNQ…VKGSGGSLLR (111 aa). Residues 155-175 traverse the membrane as a helical segment; sequence FLLTGFAGMVLCLLLTALGAF. Residues 176–435 are Cytoplasmic-facing; the sequence is YLSRRLVRGI…DSATPEAPPK (260 aa). The 54-residue stretch at 183–236 folds into the HAMP domain; it reads RGIVGPLDQLAKVAHTVRRERDFEKRVPEAGIAELSQLGEDFNALLDELESWQA. Residues 279–415 enclose the GGDEF domain; it reads EQLAVLFIDS…GSRRLAELND (137 aa). Mg(2+) is bound by residues serine 288 and aspartate 330. Aspartate 330 serves as the catalytic Proton acceptor. The segment covering 414 to 426 has biased composition (basic and acidic residues); sequence NDPRILQEEKEID. The tract at residues 414–435 is disordered; it reads NDPRILQEEKEIDSATPEAPPK.

It depends on Mg(2+) as a cofactor. Phosphorylated at both Tyr residues and Ser/Thr residues. Dephosphorylated and inactivated by TpbA.

The protein localises to the cell inner membrane. The catalysed reaction is 2 GTP = 3',3'-c-di-GMP + 2 diphosphate. It participates in purine metabolism; 3',5'-cyclic di-GMP biosynthesis. With respect to regulation, activity is tightly controlled by YfiR, a small periplasmic protein, and the OmpA/Pal-like outer-membrane lipoprotein YfiB. Diguanylate cyclase activity is inhibited by the specific interaction of YfiR with the TpbB periplasmic domain and is activated by YfiB, which releases the YfiR-mediated repression through sequestration of YfiR to the outer membrane. Activity is also controlled by dephosphorylation of the periplasmic domain by the tyrosine phosphatase TpbA. In terms of biological role, catalyzes the synthesis of cyclic-di-GMP (c-di-GMP) via the condensation of 2 GTP molecules. Important for the regulation of biofilm maintenance when exposed to peroxide. Its function is as follows. Part of the YfiB-TpbB-YfiR (or yfiBNR) system, encoding a tripartite signaling module that modulates intracellular c-di-GMP levels. The system is a key regulator of the small colony variant (SCV) phenotype, and plays an important role in biofilm formation and in vivo persistence. The c-di-GMP produced by TpbB/YfiN stimulates the production of the Pel and Psl exopolysaccharides, which promotes surface attachment, generates an SCV phenotype and confers resistance against phagocytosis. The protein is Diguanylate cyclase TpbB of Pseudomonas aeruginosa (strain UCBPP-PA14).